A 78-amino-acid chain; its full sequence is Beta-defensin 105A (78 aa).

The N-terminal stretch at 1-27 is a signal peptide; it reads MALIRKTFYFLFAVFFILVQLPSGCQA. 3 cysteine pairs are disulfide-bonded: Cys-46–Cys-74, Cys-53–Cys-67, and Cys-57–Cys-73.

It belongs to the beta-defensin family.

The protein resides in the secreted. In terms of biological role, has antimicrobial activity. In Hylobates lar (Lar gibbon), this protein is Beta-defensin 105A (DEFB105A).